Reading from the N-terminus, the 542-residue chain is Exopolysaccharide phosphotransferase CpsY (542 aa).

The segment at 522–542 is disordered; it reads SPTVSAPLEDGQTANPAQTAR. Over residues 533–542 the composition is skewed to polar residues; the sequence is QTANPAQTAR.

The protein belongs to the stealth family.

This is Exopolysaccharide phosphotransferase CpsY (cpsY) from Mycobacterium leprae (strain TN).